The following is a 73-amino-acid chain: MKPINIQDQFLNQIRKDNTFVTVFLLNGFQLRGQVKGFDNFTVLLETEGKQQLIYKHAISTFAPQKNVNLELE.

The region spanning 8-68 (DQFLNQIRKD…ISTFAPQKNV (61 aa)) is the Sm domain.

Belongs to the Hfq family. In terms of assembly, homohexamer.

Its function is as follows. RNA chaperone that binds small regulatory RNA (sRNAs) and mRNAs to facilitate mRNA translational regulation in response to envelope stress, environmental stress and changes in metabolite concentrations. Also binds with high specificity to tRNAs. The polypeptide is RNA-binding protein Hfq (Bacillus pumilus (strain SAFR-032)).